A 281-amino-acid polypeptide reads, in one-letter code: Ribosomal RNA small subunit methyltransferase A (281 aa).

Residues N36, L38, G63, E84, D109, and N127 each coordinate S-adenosyl-L-methionine.

This sequence belongs to the class I-like SAM-binding methyltransferase superfamily. rRNA adenine N(6)-methyltransferase family. RsmA subfamily.

It localises to the cytoplasm. The enzyme catalyses adenosine(1518)/adenosine(1519) in 16S rRNA + 4 S-adenosyl-L-methionine = N(6)-dimethyladenosine(1518)/N(6)-dimethyladenosine(1519) in 16S rRNA + 4 S-adenosyl-L-homocysteine + 4 H(+). Functionally, specifically dimethylates two adjacent adenosines (A1518 and A1519) in the loop of a conserved hairpin near the 3'-end of 16S rRNA in the 30S particle. May play a critical role in biogenesis of 30S subunits. The polypeptide is Ribosomal RNA small subunit methyltransferase A (Borrelia garinii subsp. bavariensis (strain ATCC BAA-2496 / DSM 23469 / PBi) (Borreliella bavariensis)).